Reading from the N-terminus, the 206-residue chain is Peptidyl-tRNA hydrolase (206 aa).

Tyrosine 14 serves as a coordination point for tRNA. The active-site Proton acceptor is histidine 19. TRNA contacts are provided by phenylalanine 64 and asparagine 66. Residues 185 to 206 (VNGEAPKKSKDQAKEPANEQPR) form a disordered region. Residues 189–206 (APKKSKDQAKEPANEQPR) show a composition bias toward basic and acidic residues.

This sequence belongs to the PTH family. As to quaternary structure, monomer.

It localises to the cytoplasm. The enzyme catalyses an N-acyl-L-alpha-aminoacyl-tRNA + H2O = an N-acyl-L-amino acid + a tRNA + H(+). Its function is as follows. Hydrolyzes ribosome-free peptidyl-tRNAs (with 1 or more amino acids incorporated), which drop off the ribosome during protein synthesis, or as a result of ribosome stalling. Catalyzes the release of premature peptidyl moieties from peptidyl-tRNA molecules trapped in stalled 50S ribosomal subunits, and thus maintains levels of free tRNAs and 50S ribosomes. This is Peptidyl-tRNA hydrolase from Herpetosiphon aurantiacus (strain ATCC 23779 / DSM 785 / 114-95).